Consider the following 313-residue polypeptide: Homoserine O-acetyltransferase (313 aa).

C142 acts as the Acyl-thioester intermediate in catalysis. 2 residues coordinate substrate: K163 and S191. H234 (proton acceptor) is an active-site residue. Residue E236 is part of the active site. R248 contributes to the substrate binding site.

Belongs to the MetA family.

The protein resides in the cytoplasm. The enzyme catalyses L-homoserine + acetyl-CoA = O-acetyl-L-homoserine + CoA. It functions in the pathway amino-acid biosynthesis; L-methionine biosynthesis via de novo pathway; O-acetyl-L-homoserine from L-homoserine: step 1/1. Its function is as follows. Transfers an acetyl group from acetyl-CoA to L-homoserine, forming acetyl-L-homoserine. This chain is Homoserine O-acetyltransferase, found in Streptococcus sanguinis (strain SK36).